A 119-amino-acid polypeptide reads, in one-letter code: uncharacterized protein (119 aa).

Positions 1–18 are cleaved as a signal peptide; the sequence is MPAVFMLASSSALQCGRG. A disordered region spans residues 23-100; that stretch reads PRTEVGAGHS…MFPGPLRGPA (78 aa). Over residues 43–71 the composition is skewed to polar residues; that stretch reads GNQTSVIPATSRQAALGTSWTQRRTQPLQ. Asn44 is a glycosylation site (N-linked (GlcNAc...) asparagine).

It localises to the secreted. This is an uncharacterized protein from Homo sapiens (Human).